A 157-amino-acid polypeptide reads, in one-letter code: Lipoprotein signal peptidase (157 aa).

Helical transmembrane passes span 10-30, 36-56, 58-78, and 84-104; these read FIFIGVFLLIFGTDQAIKYAI, YESSIIDIVLVFNKGVAFSLL, FLEGSLKYLQILLILGLFIFL, and LFKAHTIEFGMVFGAGVSNIL. Catalysis depends on residues D114 and D131. The chain crosses the membrane as a helical span at residues 123 to 143; the sequence is DFAIFNFADVMIDVGVGVLLI.

Belongs to the peptidase A8 family.

Its subcellular location is the cell inner membrane. It carries out the reaction Release of signal peptides from bacterial membrane prolipoproteins. Hydrolyzes -Xaa-Yaa-Zaa-|-(S,diacylglyceryl)Cys-, in which Xaa is hydrophobic (preferably Leu), and Yaa (Ala or Ser) and Zaa (Gly or Ala) have small, neutral side chains.. It functions in the pathway protein modification; lipoprotein biosynthesis (signal peptide cleavage). Functionally, this protein specifically catalyzes the removal of signal peptides from prolipoproteins. The chain is Lipoprotein signal peptidase from Helicobacter acinonychis (strain Sheeba).